Consider the following 103-residue polypeptide: Histone H4 (103 aa).

The segment covering 1–14 (MSGRGKGGKGLGKG) has biased composition (gly residues). The disordered stretch occupies residues 1–20 (MSGRGKGGKGLGKGGAKRHR). Lys6 is subject to N6-acetyl-N6-methyllysine; alternate. An N6-methyllysine; alternate mark is found at Lys6, Lys9, and Lys13. At Lys13 the chain carries N6-acetyl-N6-methyllysine; alternate. Residues 17–21 (KRHRK) mediate DNA binding. At Lys92 the chain carries N6-glutaryllysine.

It belongs to the histone H4 family. The nucleosome is a histone octamer containing two molecules each of H2A, H2B, H3 and H4 assembled in one H3-H4 heterotetramer and two H2A-H2B heterodimers. The octamer wraps approximately 147 bp of DNA. Glutarylation at Lys-92 (H4K91glu) destabilizes nucleosomes by promoting dissociation of the H2A-H2B dimers from nucleosomes.

It localises to the nucleus. Its subcellular location is the chromosome. Its function is as follows. Core component of nucleosome. Nucleosomes wrap and compact DNA into chromatin, limiting DNA accessibility to the cellular machineries which require DNA as a template. Histones thereby play a central role in transcription regulation, DNA repair, DNA replication and chromosomal stability. DNA accessibility is regulated via a complex set of post-translational modifications of histones, also called histone code, and nucleosome remodeling. The polypeptide is Histone H4 (HHF1) (Candida glabrata (strain ATCC 2001 / BCRC 20586 / JCM 3761 / NBRC 0622 / NRRL Y-65 / CBS 138) (Yeast)).